The primary structure comprises 441 residues: SVGFKAGVKDYKLTYYTPEYETKDTDILAAFRVTPQPGVPPEEAGAAVAAESSTGTWTTVWTDGLTSLDRYKGRCYGLEPVAGEENQYIAYVAYPLDLFEEGSVTNMFTSIVGNVFGFKALRALRLEDLRIPVSYIKTFQGPPHGIQVERDKLNKYGRPLLGCTIKPKLGLSAKNYGRAVYECLRGGLDFTKDDENVNSQPFMRWRDRFLFCAEAIYKAQAETGEIKGHYLNATAGTCEEMIKRAVFARELGAPIVMHDYLTGGFTANTSLAHYCRDNGLLLHIHRAMHAVIDRQKNHGMHFRVLAKALRLSGGDHIHAGTVVGKLEGEREITLGFVDLLRDDFVEKDRSRGIYFTQDWVSLPGVLPVASGGIHVWHMPALTEIFGDDSVLQFGGGTLGHPWGNAPGAVANRVALEACVQARNEGRDLAREGNEIIRQACK.

N6,N6,N6-trimethyllysine is present on Lys5. The substrate site is built by Asn114 and Thr164. The Proton acceptor role is filled by Lys166. Lys168 is a substrate binding site. Positions 192, 194, and 195 each coordinate Mg(2+). At Lys192 the chain carries N6-carboxylysine. His285 serves as the catalytic Proton acceptor. Substrate is bound by residues Arg286, His318, and Ser370.

It belongs to the RuBisCO large chain family. Type I subfamily. As to quaternary structure, heterohexadecamer of 8 large chains and 8 small chains; disulfide-linked. The disulfide link is formed within the large subunit homodimers. Mg(2+) is required as a cofactor. The disulfide bond which can form in the large chain dimeric partners within the hexadecamer appears to be associated with oxidative stress and protein turnover.

It is found in the plastid. Its subcellular location is the chloroplast. The catalysed reaction is 2 (2R)-3-phosphoglycerate + 2 H(+) = D-ribulose 1,5-bisphosphate + CO2 + H2O. It carries out the reaction D-ribulose 1,5-bisphosphate + O2 = 2-phosphoglycolate + (2R)-3-phosphoglycerate + 2 H(+). Functionally, ruBisCO catalyzes two reactions: the carboxylation of D-ribulose 1,5-bisphosphate, the primary event in carbon dioxide fixation, as well as the oxidative fragmentation of the pentose substrate in the photorespiration process. Both reactions occur simultaneously and in competition at the same active site. The polypeptide is Ribulose bisphosphate carboxylase large chain (Glycyrrhiza echinata (Licorice)).